The chain runs to 425 residues: Serine--tRNA ligase (425 aa).

228 to 230 contributes to the L-serine binding site; sequence TAE. Position 259–261 (259–261) interacts with ATP; the sequence is RSE. Position 282 (Glu282) interacts with L-serine. ATP is bound at residue 346-349; it reads EIAS. Position 382 (Ser382) interacts with L-serine.

The protein belongs to the class-II aminoacyl-tRNA synthetase family. Type-1 seryl-tRNA synthetase subfamily. As to quaternary structure, homodimer. The tRNA molecule binds across the dimer.

Its subcellular location is the cytoplasm. The enzyme catalyses tRNA(Ser) + L-serine + ATP = L-seryl-tRNA(Ser) + AMP + diphosphate + H(+). The catalysed reaction is tRNA(Sec) + L-serine + ATP = L-seryl-tRNA(Sec) + AMP + diphosphate + H(+). It participates in aminoacyl-tRNA biosynthesis; selenocysteinyl-tRNA(Sec) biosynthesis; L-seryl-tRNA(Sec) from L-serine and tRNA(Sec): step 1/1. Catalyzes the attachment of serine to tRNA(Ser). Is also able to aminoacylate tRNA(Sec) with serine, to form the misacylated tRNA L-seryl-tRNA(Sec), which will be further converted into selenocysteinyl-tRNA(Sec). The sequence is that of Serine--tRNA ligase from Rickettsia prowazekii (strain Madrid E).